A 38-amino-acid polypeptide reads, in one-letter code: Large ribosomal subunit protein bL36 (38 aa).

Belongs to the bacterial ribosomal protein bL36 family.

The polypeptide is Large ribosomal subunit protein bL36 (Psychrobacter cryohalolentis (strain ATCC BAA-1226 / DSM 17306 / VKM B-2378 / K5)).